The chain runs to 379 residues: Chaperone protein DnaJ (379 aa).

The 66-residue stretch at 5-70 folds into the J domain; it reads DYYEVLGVSR…QKRAAYDQYG (66 aa). The segment at 134–212 adopts a CR-type zinc-finger fold; it reads GVTKEIRIPT…CHGHGRVEKS (79 aa). Zn(2+)-binding residues include cysteine 147, cysteine 150, cysteine 164, cysteine 167, cysteine 186, cysteine 189, cysteine 200, and cysteine 203. 4 CXXCXGXG motif repeats span residues 147–154, 164–171, 186–193, and 200–207; these read CDVCHGSG, CPTCHGAG, CPHCHGRG, and CNKCHGHG.

This sequence belongs to the DnaJ family. Homodimer. Zn(2+) serves as cofactor.

It localises to the cytoplasm. Participates actively in the response to hyperosmotic and heat shock by preventing the aggregation of stress-denatured proteins and by disaggregating proteins, also in an autonomous, DnaK-independent fashion. Unfolded proteins bind initially to DnaJ; upon interaction with the DnaJ-bound protein, DnaK hydrolyzes its bound ATP, resulting in the formation of a stable complex. GrpE releases ADP from DnaK; ATP binding to DnaK triggers the release of the substrate protein, thus completing the reaction cycle. Several rounds of ATP-dependent interactions between DnaJ, DnaK and GrpE are required for fully efficient folding. Also involved, together with DnaK and GrpE, in the DNA replication of plasmids through activation of initiation proteins. The sequence is that of Chaperone protein DnaJ from Yersinia pseudotuberculosis serotype O:1b (strain IP 31758).